The primary structure comprises 487 residues: Betaine aldehyde dehydrogenase (487 aa).

K(+) contacts are provided by Ser26 and Asp93. Position 150 to 152 (150 to 152 (GAW)) interacts with NAD(+). Residue Lys162 is the Charge relay system of the active site. Residues 176–179 (KPSE) and 229–232 (SVPT) contribute to the NAD(+) site. A K(+)-binding site is contributed by Leu244. The active-site Proton acceptor is the Glu250. Positions 252, 284, and 384 each coordinate NAD(+). Residue Cys284 is the Nucleophile of the active site. The residue at position 284 (Cys284) is a Cysteine sulfenic acid (-SOH). K(+) contacts are provided by Lys454 and Gly457. Residue Glu461 is the Charge relay system of the active site.

The protein belongs to the aldehyde dehydrogenase family. As to quaternary structure, dimer of dimers. Requires K(+) as cofactor.

It catalyses the reaction betaine aldehyde + NAD(+) + H2O = glycine betaine + NADH + 2 H(+). The protein operates within amine and polyamine biosynthesis; betaine biosynthesis via choline pathway; betaine from betaine aldehyde: step 1/1. In terms of biological role, involved in the biosynthesis of the osmoprotectant glycine betaine. Catalyzes the irreversible oxidation of betaine aldehyde to the corresponding acid. The chain is Betaine aldehyde dehydrogenase from Rhizobium etli (strain CIAT 652).